A 158-amino-acid polypeptide reads, in one-letter code: Transcriptional repressor NrdR (158 aa).

The disordered stretch occupies residues 1 to 22 (MRCPYCGSEDTQVKDSRPAEDN). Residues 3-34 (CPYCGSEDTQVKDSRPAEDNTSIRRRRICPDC) fold into a zinc finger. The span at 11-22 (TQVKDSRPAEDN) shows a compositional bias: basic and acidic residues. In terms of domain architecture, ATP-cone spans 49-139 (LMVIKKTGRK…VYRDFSLAED (91 aa)).

It belongs to the NrdR family. Zn(2+) is required as a cofactor.

Functionally, negatively regulates transcription of bacterial ribonucleotide reductase nrd genes and operons by binding to NrdR-boxes. The sequence is that of Transcriptional repressor NrdR from Rhizobium etli (strain CIAT 652).